We begin with the raw amino-acid sequence, 807 residues long: Glycerol-3-phosphate acyltransferase (807 aa).

The HXXXXD motif signature appears at 308–313 (CHRSHM).

The protein belongs to the GPAT/DAPAT family.

Its subcellular location is the cell inner membrane. It carries out the reaction sn-glycerol 3-phosphate + an acyl-CoA = a 1-acyl-sn-glycero-3-phosphate + CoA. It functions in the pathway phospholipid metabolism; CDP-diacylglycerol biosynthesis; CDP-diacylglycerol from sn-glycerol 3-phosphate: step 1/3. In Shewanella putrefaciens (strain CN-32 / ATCC BAA-453), this protein is Glycerol-3-phosphate acyltransferase.